We begin with the raw amino-acid sequence, 423 residues long: SH2 domain-containing protein 5 (423 aa).

Residues 28–146 (AQYVGSFPVD…LLCRSFQLAY (119 aa)) form the PID domain. The SH2 domain occupies 296–392 (WAFAGISRPC…LDMGRLNPTY (97 aa)). The tract at residues 392–423 (YEEQDCGPPGRPPRTLRPLSHAKSEAELQGLG) is disordered.

As to quaternary structure, interacts with BCR.

It is found in the postsynaptic density. In terms of biological role, may be involved in synaptic plasticity regulation through the control of Rac-GTP levels. The sequence is that of SH2 domain-containing protein 5 from Homo sapiens (Human).